A 350-amino-acid chain; its full sequence is Protein pelota homolog (350 aa).

This sequence belongs to the eukaryotic release factor 1 family. Pelota subfamily. In terms of assembly, monomer. A divalent metal cation is required as a cofactor.

The protein localises to the cytoplasm. Its function is as follows. May function in recognizing stalled ribosomes, interact with stem-loop structures in stalled mRNA molecules, and effect endonucleolytic cleavage of the mRNA. May play a role in the release non-functional ribosomes and degradation of damaged mRNAs. Has endoribonuclease activity. The sequence is that of Protein pelota homolog from Methanosarcina mazei (strain ATCC BAA-159 / DSM 3647 / Goe1 / Go1 / JCM 11833 / OCM 88) (Methanosarcina frisia).